The sequence spans 561 residues: Arginine--tRNA ligase (561 aa).

The short motif at 128–138 is the 'HIGH' region element; sequence ANPTGPLHVGH.

It belongs to the class-I aminoacyl-tRNA synthetase family. As to quaternary structure, monomer.

The protein resides in the cytoplasm. The enzyme catalyses tRNA(Arg) + L-arginine + ATP = L-arginyl-tRNA(Arg) + AMP + diphosphate. This is Arginine--tRNA ligase from Methylibium petroleiphilum (strain ATCC BAA-1232 / LMG 22953 / PM1).